Consider the following 267-residue polypeptide: Diphthine synthase (267 aa).

Residues L9, D85, V88, 113 to 114 (SI), L170, A211, and H236 each bind S-adenosyl-L-methionine.

The protein belongs to the diphthine synthase family. In terms of assembly, homodimer.

The enzyme catalyses 2-[(3S)-amino-3-carboxypropyl]-L-histidyl-[translation elongation factor 2] + 3 S-adenosyl-L-methionine = diphthine-[translation elongation factor 2] + 3 S-adenosyl-L-homocysteine + 3 H(+). The protein operates within protein modification; peptidyl-diphthamide biosynthesis. Functionally, S-adenosyl-L-methionine-dependent methyltransferase that catalyzes the trimethylation of the amino group of the modified target histidine residue in translation elongation factor 2 (EF-2), to form an intermediate called diphthine. The three successive methylation reactions represent the second step of diphthamide biosynthesis. This Methanococcoides burtonii (strain DSM 6242 / NBRC 107633 / OCM 468 / ACE-M) protein is Diphthine synthase.